A 361-amino-acid polypeptide reads, in one-letter code: Phosphoserine aminotransferase (361 aa).

An L-glutamate-binding site is contributed by R42. Residues 76–77 (AT), W102, T152, D172, and Q195 contribute to the pyridoxal 5'-phosphate site. K196 carries the N6-(pyridoxal phosphate)lysine modification. 237-238 (NT) provides a ligand contact to pyridoxal 5'-phosphate.

This sequence belongs to the class-V pyridoxal-phosphate-dependent aminotransferase family. SerC subfamily. In terms of assembly, homodimer. The cofactor is pyridoxal 5'-phosphate.

It is found in the cytoplasm. The enzyme catalyses O-phospho-L-serine + 2-oxoglutarate = 3-phosphooxypyruvate + L-glutamate. It carries out the reaction 4-(phosphooxy)-L-threonine + 2-oxoglutarate = (R)-3-hydroxy-2-oxo-4-phosphooxybutanoate + L-glutamate. The protein operates within amino-acid biosynthesis; L-serine biosynthesis; L-serine from 3-phospho-D-glycerate: step 2/3. It participates in cofactor biosynthesis; pyridoxine 5'-phosphate biosynthesis; pyridoxine 5'-phosphate from D-erythrose 4-phosphate: step 3/5. Functionally, catalyzes the reversible conversion of 3-phosphohydroxypyruvate to phosphoserine and of 3-hydroxy-2-oxo-4-phosphonooxybutanoate to phosphohydroxythreonine. In Xanthomonas euvesicatoria pv. vesicatoria (strain 85-10) (Xanthomonas campestris pv. vesicatoria), this protein is Phosphoserine aminotransferase.